The following is a 245-amino-acid chain: 1-(5-phosphoribosyl)-5-[(5-phosphoribosylamino)methylideneamino] imidazole-4-carboxamide isomerase (245 aa).

The active-site Proton acceptor is the Asp-8. Asp-129 acts as the Proton donor in catalysis.

The protein belongs to the HisA/HisF family.

Its subcellular location is the cytoplasm. The enzyme catalyses 1-(5-phospho-beta-D-ribosyl)-5-[(5-phospho-beta-D-ribosylamino)methylideneamino]imidazole-4-carboxamide = 5-[(5-phospho-1-deoxy-D-ribulos-1-ylimino)methylamino]-1-(5-phospho-beta-D-ribosyl)imidazole-4-carboxamide. It participates in amino-acid biosynthesis; L-histidine biosynthesis; L-histidine from 5-phospho-alpha-D-ribose 1-diphosphate: step 4/9. The polypeptide is 1-(5-phosphoribosyl)-5-[(5-phosphoribosylamino)methylideneamino] imidazole-4-carboxamide isomerase (Geotalea uraniireducens (strain Rf4) (Geobacter uraniireducens)).